A 126-amino-acid polypeptide reads, in one-letter code: Flagellar protein FliT (126 aa).

Residues 1 to 50 form a required for homodimerization region; sequence MASPHRLLKDYQQLLSLSQKILHLAVNGQWDTLVEQEIVYVQSVEGLVNT. Residues 60–98 are fliD binding; that stretch reads MRLHLRQILQEVMDNEAKVKQLLQKRMDELSSLMGQSLK.

The protein belongs to the FliT family. As to quaternary structure, homodimer. Interacts with FliD and FlhC.

It is found in the cytoplasm. Its subcellular location is the cytosol. In terms of biological role, dual-function protein that regulates the transcription of class 2 flagellar operons and that also acts as an export chaperone for the filament-capping protein FliD. As a transcriptional regulator, acts as an anti-FlhDC factor; it directly binds FlhC, thus inhibiting the binding of the FlhC/FlhD complex to class 2 promoters, resulting in decreased expression of class 2 flagellar operons. As a chaperone, effects FliD transition to the membrane by preventing its premature polymerization, and by directing it to the export apparatus. The polypeptide is Flagellar protein FliT (Pectobacterium carotovorum subsp. carotovorum (strain PC1)).